A 196-amino-acid polypeptide reads, in one-letter code: dITP/XTP pyrophosphatase (196 aa).

A substrate-binding site is contributed by 10–15 (TTNPHK). The Proton acceptor role is filled by D68. D68 contacts Mg(2+). Substrate is bound by residues S69, 148-151 (FGYD), and 175-176 (HR).

Belongs to the HAM1 NTPase family. Homodimer. Mg(2+) is required as a cofactor.

It carries out the reaction XTP + H2O = XMP + diphosphate + H(+). The enzyme catalyses dITP + H2O = dIMP + diphosphate + H(+). The catalysed reaction is ITP + H2O = IMP + diphosphate + H(+). Its function is as follows. Pyrophosphatase that catalyzes the hydrolysis of nucleoside triphosphates to their monophosphate derivatives, with a high preference for the non-canonical purine nucleotides XTP (xanthosine triphosphate), dITP (deoxyinosine triphosphate) and ITP. Seems to function as a house-cleaning enzyme that removes non-canonical purine nucleotides from the nucleotide pool, thus preventing their incorporation into DNA/RNA and avoiding chromosomal lesions. This is dITP/XTP pyrophosphatase from Thermotoga maritima (strain ATCC 43589 / DSM 3109 / JCM 10099 / NBRC 100826 / MSB8).